We begin with the raw amino-acid sequence, 149 residues long: Calmodulin (149 aa).

Residue Ala2 is modified to N-acetylalanine. EF-hand domains lie at 8-43 (EQIA…LGQN), 44-79 (PTEA…KMKD), 81-116 (DSEE…LGEK), and 117-149 (LTDE…MMAK). Residues Asp21, Asp23, Asp25, Cys27, Glu32, Asp57, Asp59, Asn61, Thr63, Glu68, Asp94, Asp96, Asn98, and Glu105 each contribute to the Ca(2+) site. N6,N6,N6-trimethyllysine is present on Lys116. Positions 130, 132, 134, 136, and 141 each coordinate Ca(2+).

Belongs to the calmodulin family. The N-terminus is blocked.

Calmodulin mediates the control of a large number of enzymes, ion channels and other proteins by Ca(2+). Among the enzymes to be stimulated by the calmodulin-Ca(2+) complex are a number of protein kinases and phosphatases. The protein is Calmodulin of Spinacia oleracea (Spinach).